We begin with the raw amino-acid sequence, 490 residues long: Sushi domain-containing protein 4 (490 aa).

Residues M1–Q21 are disordered. Residues M1–C41 form the signal peptide. At F42 to T319 the chain is on the extracellular side. 4 consecutive Sushi domains span residues Q55–Q119, E120–G179, Q178–A239, and E241–K304. Intrachain disulfides connect C57-C99, C85-C117, C122-C165, C147-C177, C180-C224, C210-C237, C243-C289, and C274-C302. N104 and N134 each carry an N-linked (GlcNAc...) asparagine glycan. N192 carries an N-linked (GlcNAc...) asparagine glycan. A helical transmembrane segment spans residues W320–A340. Residues R341–P490 are Cytoplasmic-facing. Residues G401–P490 form a disordered region. Over residues C430–A456 the composition is skewed to polar residues. Acidic residues predominate over residues I479–P490.

In terms of tissue distribution, isoform 3 is the predominant isoform in all tissues except cortex, cerebellum, kidney, and breast. Isoform 1 is found primarily in the esophagus and the brain.

The protein resides in the membrane. It is found in the secreted. Acts as a complement inhibitor by disrupting the formation of the classical C3 convertase. Isoform 3 inhibits the classical complement pathway, while membrane-bound isoform 1 inhibits deposition of C3b via both the classical and alternative complement pathways. This chain is Sushi domain-containing protein 4 (SUSD4), found in Homo sapiens (Human).